A 212-amino-acid polypeptide reads, in one-letter code: HTH-type transcriptional regulator RutR (212 aa).

One can recognise an HTH tetR-type domain in the interval 17 to 77; that stretch reads SAKKKAILSA…AVLRQILDIW (61 aa). A DNA-binding region (H-T-H motif) is located at residues 39–58; that stretch reads TRLEQIAELAGVSKTNLLYY.

Homodimer.

In terms of biological role, master transcription regulator which represses the degradation of pyrimidines (rutABCDEFG) and purines (gcl operon) for maintenance of metabolic balance between pyrimidines and purines. It also regulates the synthesis of pyrimidine nucleotides and arginine from glutamine (carAB) and the supply of glutamate (gadABWX). The protein is HTH-type transcriptional regulator RutR (rutR) of Escherichia coli O6:H1 (strain CFT073 / ATCC 700928 / UPEC).